We begin with the raw amino-acid sequence, 755 residues long: SWI/SNF-related matrix-associated actin-dependent regulator of chromatin subfamily A-like protein 1 (755 aa).

A coiled-coil region spans residues 7–27; that stretch reads SEIAEKKRIALAKLQAKKSQL. Disordered stretches follow at residues 26-91 and 104-134; these read QLLA…NKSS and SNRE…SLSS. Residues 32-63 show a composition bias toward polar residues; the sequence is PATNGKSTTSATGATQHANNGKSNPNQPQAKS. The residue at position 63 (Ser-63) is a Phosphoserine. The region spanning 139–217 is the HARP domain; it reads PVAVLLGNSI…KPYVHMNGIP (79 aa). The region spanning 256-412 is the Helicase ATP-binding domain; the sequence is CFAIAQKGRI…FTQLQMIDGK (157 aa). 269–276 is a binding site for ATP; sequence DEMGLGKT. The DESH box signature appears at 361-364; it reads DESH. The 155-residue stretch at 527 to 681 folds into the Helicase C-terminal domain; sequence YLKTLVKEQK…NLQKATHTAA (155 aa).

The protein belongs to the SNF2/RAD54 helicase family. SMARCAL1 subfamily.

The protein localises to the nucleus. In terms of biological role, ATP-dependent annealing helicase that catalyzes the rewinding of the stably unwound DNA. The polypeptide is SWI/SNF-related matrix-associated actin-dependent regulator of chromatin subfamily A-like protein 1 (Marcal1) (Drosophila melanogaster (Fruit fly)).